The primary structure comprises 552 residues: Glucose-6-phosphate isomerase (552 aa).

Catalysis depends on Glu357, which acts as the Proton donor. Active-site residues include His388 and Lys516. The tract at residues 525 to 552 (ELASTKPPKHDSSTNALIERYRTRGCRS) is disordered.

This sequence belongs to the GPI family.

It is found in the cytoplasm. It carries out the reaction alpha-D-glucose 6-phosphate = beta-D-fructose 6-phosphate. The protein operates within carbohydrate biosynthesis; gluconeogenesis. It participates in carbohydrate degradation; glycolysis; D-glyceraldehyde 3-phosphate and glycerone phosphate from D-glucose: step 2/4. Functionally, catalyzes the reversible isomerization of glucose-6-phosphate to fructose-6-phosphate. This Laribacter hongkongensis (strain HLHK9) protein is Glucose-6-phosphate isomerase.